A 596-amino-acid chain; its full sequence is MTIQTPNGFTLDNSGKRIVVDPVTRIEGHMRVEVNVDENNIIRNAVSTGTMWRGIEVILKNRDPRDAWAFTERICGVCTGTHALTSVRAVENALGITIPDNANSIRNLMQLALQVHDHVVHFYHLHALDWVDVVSALSADPKATSALAQSISDWPLSSPGYFKDIQTRLKKFVESGQLGPFKNGYWGNASYKLPPEANLMAVAHYLEALDFQKEIVKIHTIFGGKNPHPNWLVGGVPCPINVDGTGAVGAINMERLNMVTSIIDQLIEFNDKVYVPDIMAIGSFYKDWLYGGGLSGKNVLAYGDVPEHANDYSEASLKLPRGAIINGNLAEVFPVDHADPEQIQEFVTHSWYKYPDESKGLHPWDGITEPHYELGPNAKGTKTNIEQLDEGAKYSWIKAPRWRGNAMEVGPLARWVIGYAQNKAEFKDPVDKVLKDLGLPVTALFSTLGRTAARALESQWAGYQMRYFQNKLIANIKAGDSNTAFVDKWKPETWPKEVKGVGFTEAPRGRLAHWIRIKDGKIDNYQCVVPTTWNGSPRDPTGNIGAFEASLMDTPMSNPTQPLEILRTIHSFDPCLACSTHVMSPDGQEMARVQVR.

Positions 75, 78, 575, and 578 each coordinate Ni(2+).

This sequence belongs to the [NiFe]/[NiFeSe] hydrogenase large subunit family. Heterodimer of a large and a small subunit. It depends on Ni(2+) as a cofactor.

Its subcellular location is the cell membrane. It catalyses the reaction H2 + A = AH2. Functionally, this enzyme recycles the H(2) produced by nitrogenase to increase the production of ATP and to protect nitrogenase against inhibition or damage by O(2) under carbon- or phosphate-limited conditions. In Rhizobium leguminosarum bv. viciae, this protein is Uptake hydrogenase large subunit (hupB).